A 290-amino-acid chain; its full sequence is MLKNVHQKASHHTRPFRAWVKLLWQRIDEDNMTTLAGNLAYVSLLSLVPLVAVIFALFAAFPMFSEVSVQLRHFVFANFMPATGDVIQRYIEQFVANSSKMTAVGACGLIVTALLLMYAIDSALNTIWRSKKVRPKVYSFAVYWMILTLGPLLAGASLAISSYLLSLRWASELNTVIDNVLRIFPLILSWLAFWLLYSIVPTLRVPNRDAIVGALVAAILFELGKKGFALYITTFPSYQLIYGVLAVVPILFVWVYWTWCIVLLGAEITVTLGEYRKLKLAAEQEEADQP.

Helical transmembrane passes span 44-64, 104-124, 140-160, 183-203, 210-230, and 244-264; these read LLSLVPLVAVIFALFAAFPMF, VGACGLIVTALLLMYAIDSAL, FAVYWMILTLGPLLAGASLAI, IFPLILSWLAFWLLYSIVPTL, AIVGALVAAILFELGKKGFAL, and VLAVVPILFVWVYWTWCIVLL.

This sequence belongs to the UPF0761 family.

The protein resides in the cell inner membrane. This Enterobacter sp. (strain 638) protein is UPF0761 membrane protein Ent638_4092.